The sequence spans 404 residues: Serpin-Z2B (404 aa).

Residues 349–373 (GTEAAAATACTMKFLCLTLTSPVDF) form an RCL region.

Belongs to the serpin family.

Functionally, probable serine protease inhibitor. This is Serpin-Z2B from Oryza sativa subsp. japonica (Rice).